We begin with the raw amino-acid sequence, 433 residues long: sn-glycerol-3-phosphate-binding periplasmic protein UgpB (433 aa).

The first 25 residues, 1-25 (MFTRLITTSVLTGAIALTIGSQAFA), serve as a signal peptide directing secretion. Sn-glycerol 3-phosphate is bound by residues Tyr67, Asp91, Ser146, Ser273, Gly307, Tyr346, and Arg397.

It belongs to the bacterial solute-binding protein 1 family. In terms of assembly, the complex is composed of two ATP-binding proteins (UgpC), two transmembrane proteins (UgpA and UgpE) and a solute-binding protein (UgpB).

The protein resides in the periplasm. Its function is as follows. Part of the ABC transporter complex UgpBAEC involved in sn-glycerol-3-phosphate (G3P) import. Binds G3P. This is sn-glycerol-3-phosphate-binding periplasmic protein UgpB (ugpB) from Brucella abortus (strain 2308).